Consider the following 700-residue polypeptide: Elongation factor G (700 aa).

One can recognise a tr-type G domain in the interval 10–286 (TKVRNIGIMA…AVIDYLPSPL (277 aa)). GTP contacts are provided by residues 19 to 26 (AHIDAGKT), 83 to 87 (DTPGH), and 137 to 140 (NKMD).

The protein belongs to the TRAFAC class translation factor GTPase superfamily. Classic translation factor GTPase family. EF-G/EF-2 subfamily.

The protein resides in the cytoplasm. In terms of biological role, catalyzes the GTP-dependent ribosomal translocation step during translation elongation. During this step, the ribosome changes from the pre-translocational (PRE) to the post-translocational (POST) state as the newly formed A-site-bound peptidyl-tRNA and P-site-bound deacylated tRNA move to the P and E sites, respectively. Catalyzes the coordinated movement of the two tRNA molecules, the mRNA and conformational changes in the ribosome. This Kineococcus radiotolerans (strain ATCC BAA-149 / DSM 14245 / SRS30216) protein is Elongation factor G.